A 225-amino-acid polypeptide reads, in one-letter code: C-reactive protein (225 aa).

Residues 1-18 (MLVVFLCLLSVTLEATEG) form the signal peptide. A Pentraxin (PTX) domain is found at 23-225 (SGKVLQFKTA…TGNVLVATDN (203 aa)). Cys-54 and Cys-116 are oxidised to a cystine. Residues Asp-78, Asp-157, Pro-158, Asp-159, and Gln-169 each contribute to the Ca(2+) site.

This sequence belongs to the pentraxin family. Homotrimer. It depends on Ca(2+) as a cofactor.

Its subcellular location is the secreted. In terms of biological role, displays several functions associated with host defense: it promotes agglutination, bacterial capsular swelling, phagocytosis, and complement fixation through its calcium-dependent binding to phosphorylcholine. The sequence is that of C-reactive protein from Danio rerio (Zebrafish).